Reading from the N-terminus, the 434-residue chain is Alpha-enolase (434 aa).

S2 is modified (N-acetylserine). S40 contributes to the Mg(2+) binding site. At Y44 the chain carries Phosphotyrosine. K60 carries the post-translational modification N6-acetyllysine; alternate. K60 carries the post-translational modification N6-succinyllysine; alternate. Residue K71 is modified to N6-acetyllysine. Residue K89 is modified to N6-acetyllysine; alternate. K89 carries the N6-succinyllysine; alternate modification. N6-acetyllysine occurs at positions 92 and 126. H158 and E167 together coordinate substrate. K193 and K199 each carry N6-acetyllysine. N6-acetyllysine; alternate is present on K202. K202 participates in a covalent cross-link: Glycyl lysine isopeptide (Lys-Gly) (interchain with G-Cter in SUMO2); alternate. The active-site Proton donor is the E210. 2 positions are modified to N6-acetyllysine; alternate: K228 and K233. An N6-succinyllysine; alternate modification is found at K228. Residue K228 is modified to N6-(2-hydroxyisobutyryl)lysine; alternate. N6-malonyllysine; alternate is present on K233. Residue D245 participates in Mg(2+) binding. A Phosphoserine modification is found at S254. N6-acetyllysine is present on K256. The residue at position 263 (S263) is a Phosphoserine. Residue K281 is modified to N6-acetyllysine; alternate. K281 bears the N6-(2-hydroxyisobutyryl)lysine; alternate mark. Y287 is modified (phosphotyrosine). S291 bears the Phosphoserine mark. Mg(2+) contacts are provided by E293 and D318. Residues E293 and D318 each coordinate substrate. An N6-acetyllysine mark is found at K335 and K343. K343 functions as the Proton acceptor in the catalytic mechanism. Substrate is bound by residues 370-373 and K394; that span reads SHRS. The segment at 405-434 is required for interaction with PLG; the sequence is AKYNQILRIEEELGSKAKFAGRSFRNPLAK. Residue K406 is modified to N6-acetyllysine. K420 is subject to N6-acetyllysine; alternate. K420 carries the post-translational modification N6-succinyllysine; alternate. K420 carries the N6-malonyllysine; alternate modification.

The protein belongs to the enolase family. In terms of assembly, mammalian enolase is composed of 3 isozyme subunits, alpha, beta and gamma, which can form homodimers or heterodimers which are cell-type and development-specific. ENO1 interacts with PLG in the neuronal plasma membrane and promotes its activation. The C-terminal lysine is required for this binding. In vitro, interacts with several glycolytic enzymes including PKM, PGM, CKM and aldolase. Also binds troponin, in vitro. Interacts with ENO4 and PGAM2. Interacts with CMTM6. Mg(2+) is required as a cofactor. ISGylated. In terms of processing, lysine 2-hydroxyisobutyrylation (Khib) by p300/EP300 activates the phosphopyruvate hydratase activity. In terms of tissue distribution, testis. Found in the principal piece of sperm tail (at protein level). The alpha/alpha homodimer is expressed in embryo and in most adult tissues. The alpha/beta heterodimer and the beta/beta homodimer are found in striated muscle, and the alpha/gamma heterodimer and the gamma/gamma homodimer in neurons. In striated muscle, expression of ENO1 appears to be independent of fiber type.

It is found in the cytoplasm. The protein localises to the cell membrane. The catalysed reaction is (2R)-2-phosphoglycerate = phosphoenolpyruvate + H2O. It participates in carbohydrate degradation; glycolysis; pyruvate from D-glyceraldehyde 3-phosphate: step 4/5. Functionally, glycolytic enzyme the catalyzes the conversion of 2-phosphoglycerate to phosphoenolpyruvate. In addition to glycolysis, involved in various processes such as growth control, hypoxia tolerance and allergic responses. May also function in the intravascular and pericellular fibrinolytic system due to its ability to serve as a receptor and activator of plasminogen on the cell surface of several cell-types such as leukocytes and neurons. Stimulates immunoglobulin production. In Mus musculus (Mouse), this protein is Alpha-enolase (Eno1).